Here is a 321-residue protein sequence, read N- to C-terminus: Olfactory receptor 52N2 (321 aa).

Residues 1–27 (MSGDNSSSLTPGFFILNGVPGLEATHI) lie on the Extracellular side of the membrane. N5 is a glycosylation site (N-linked (GlcNAc...) asparagine). Residues 28 to 48 (WISLPFCFMYIIAVVGNCGLI) traverse the membrane as a helical segment. Residues 49 to 56 (CLISHEEA) lie on the Cytoplasmic side of the membrane. Residues 57–77 (LHRPMYYFLALLSFTDVTLCT) traverse the membrane as a helical segment. Residues 78 to 101 (TMVPNMLCIFWFNLKEIDFNACLA) lie on the Extracellular side of the membrane. C99 and C191 form a disulfide bridge. Residues 102–122 (QMFFVHMLTGMESGVLMLMAL) form a helical membrane-spanning segment. Topologically, residues 123–141 (DRYVAICYPLRYATILTNP) are cytoplasmic. A helical transmembrane segment spans residues 142–162 (VIAKAGLATFLRNVMLIIPFT). Over 163–198 (LLTKRLPYCRGNFIPHTYCDHMSVAKVSCGNFKVNA) the chain is Extracellular. A helical transmembrane segment spans residues 199–219 (IYGLMVALLIGVFDICCISVS). Over 220–239 (YTMILQAVMSLSSADARHKA) the chain is Cytoplasmic. The helical transmembrane segment at 240-260 (FSTCTSHMCSIVITYVAAFFT) threads the bilayer. The Extracellular segment spans residues 261–276 (FFTHRFVGHNIPNHIH). The chain crosses the membrane as a helical span at residues 277-297 (IIVANLYLLLPPTMNPIVYGV). Over 298-321 (KTKQIQEGVIKFLLGDKVSFTYDK) the chain is Cytoplasmic.

The protein belongs to the G-protein coupled receptor 1 family.

The protein localises to the cell membrane. Functionally, odorant receptor. This Homo sapiens (Human) protein is Olfactory receptor 52N2 (OR52N2).